The sequence spans 320 residues: MIKKIGVLTSGGDSPGMNAAIRGVVRAALSEGLEVFGIYDGYLGLYEDRMEKLDRYSVSDMINRGGTFLGSARFPEFRDDSVRAKAIENLQNRGIDALVVIGGDGSYMGAKRLTEEGFPCIGLPGTIDNDVAGTDYTIGFFTALETVVEAIDRLRDTSSSHQRISIVEVMGRYCGDLTLAAAIAGGCEFIVLPEIEFNREDLVCEIKAGIDKGKKHAIVAITEHICDIDELARHIEQETKRETRATVLGHIQRGGSPVAYDRILASRMGAYAIELLLQGYGGRCVGIQNEKMVHHDIIDAIENMKRPFKGDWLETAKKLY.

Gly12 contributes to the ATP binding site. ADP contacts are provided by residues 22–26 (RGVVR) and 55–60 (RYSVSD). Residues 73 to 74 (RF) and 103 to 106 (GDGS) contribute to the ATP site. Asp104 is a binding site for Mg(2+). Position 126-128 (126-128 (TID)) interacts with substrate. Asp128 functions as the Proton acceptor in the catalytic mechanism. ADP is bound at residue Arg155. Residues Arg163 and 170-172 (MGR) each bind substrate. ADP-binding positions include 186–188 (GCE), Lys212, and 214–216 (KKH). Substrate is bound by residues Glu223, Arg244, and 250–253 (HIQR).

Belongs to the phosphofructokinase type A (PFKA) family. ATP-dependent PFK group I subfamily. Prokaryotic clade 'B1' sub-subfamily. Homotetramer. The cofactor is Mg(2+).

Its subcellular location is the cytoplasm. The catalysed reaction is beta-D-fructose 6-phosphate + ATP = beta-D-fructose 1,6-bisphosphate + ADP + H(+). The protein operates within carbohydrate degradation; glycolysis; D-glyceraldehyde 3-phosphate and glycerone phosphate from D-glucose: step 3/4. Its activity is regulated as follows. Allosterically activated by ADP and other diphosphonucleosides, and allosterically inhibited by phosphoenolpyruvate. Its function is as follows. Catalyzes the phosphorylation of D-fructose 6-phosphate to fructose 1,6-bisphosphate by ATP, the first committing step of glycolysis. The polypeptide is ATP-dependent 6-phosphofructokinase (Serratia proteamaculans (strain 568)).